Here is a 248-residue protein sequence, read N- to C-terminus: Probable transcriptional regulatory protein Mnod_7401 (248 aa).

Belongs to the TACO1 family.

The protein localises to the cytoplasm. In Methylobacterium nodulans (strain LMG 21967 / CNCM I-2342 / ORS 2060), this protein is Probable transcriptional regulatory protein Mnod_7401.